Here is a 202-residue protein sequence, read N- to C-terminus: MANLLFALAAYLIGSVSFAVVVSKVMGLPDPHTYGSGNPGATNVLRTGNKKAAIFTLIGDGLKGWLAVWLASRFGPAYGLDDNGLAMVALAVFLGHLFPVFHRFAGGKGVATAAGVLLAINPILGLATLATWVIIAFFFRYSSLAALVAAIFAPVFYVLMEGIDAMAGAVLIIAILLIARHRQNIAKLLTGKESRIGEKKKV.

Transmembrane regions (helical) follow at residues 2 to 22, 85 to 105, 119 to 139, and 158 to 178; these read ANLL…AVVV, LAMV…HRFA, AINP…AFFF, and VLME…ILLI.

The protein belongs to the PlsY family. Probably interacts with PlsX.

It localises to the cell inner membrane. It catalyses the reaction an acyl phosphate + sn-glycerol 3-phosphate = a 1-acyl-sn-glycero-3-phosphate + phosphate. Its pathway is lipid metabolism; phospholipid metabolism. Functionally, catalyzes the transfer of an acyl group from acyl-phosphate (acyl-PO(4)) to glycerol-3-phosphate (G3P) to form lysophosphatidic acid (LPA). This enzyme utilizes acyl-phosphate as fatty acyl donor, but not acyl-CoA or acyl-ACP. The polypeptide is Glycerol-3-phosphate acyltransferase (Cupriavidus pinatubonensis (strain JMP 134 / LMG 1197) (Cupriavidus necator (strain JMP 134))).